The sequence spans 200 residues: Imidazoleglycerol-phosphate dehydratase (200 aa).

Belongs to the imidazoleglycerol-phosphate dehydratase family.

The protein resides in the cytoplasm. The catalysed reaction is D-erythro-1-(imidazol-4-yl)glycerol 3-phosphate = 3-(imidazol-4-yl)-2-oxopropyl phosphate + H2O. Its pathway is amino-acid biosynthesis; L-histidine biosynthesis; L-histidine from 5-phospho-alpha-D-ribose 1-diphosphate: step 6/9. The protein is Imidazoleglycerol-phosphate dehydratase of Chlorobium limicola (strain DSM 245 / NBRC 103803 / 6330).